We begin with the raw amino-acid sequence, 519 residues long: 3-octaprenyl-4-hydroxybenzoate carboxy-lyase (519 aa).

Asn-177 is a Mn(2+) binding site. Prenylated FMN contacts are provided by residues 180–182, 194–196, and 199–200; these read IYR, RWL, and RG. Glu-243 provides a ligand contact to Mn(2+). Residue Asp-318 is the Proton donor of the active site.

The protein belongs to the UbiD family. As to quaternary structure, homohexamer. Prenylated FMN is required as a cofactor. It depends on Mn(2+) as a cofactor.

The protein localises to the cell membrane. The enzyme catalyses a 4-hydroxy-3-(all-trans-polyprenyl)benzoate + H(+) = a 2-(all-trans-polyprenyl)phenol + CO2. It participates in cofactor biosynthesis; ubiquinone biosynthesis. Catalyzes the decarboxylation of 3-octaprenyl-4-hydroxy benzoate to 2-octaprenylphenol, an intermediate step in ubiquinone biosynthesis. The chain is 3-octaprenyl-4-hydroxybenzoate carboxy-lyase from Burkholderia pseudomallei (strain 1710b).